A 115-amino-acid polypeptide reads, in one-letter code: NADH-ubiquinone oxidoreductase chain 3 (115 aa).

The next 3 membrane-spanning stretches (helical) occupy residues 3-23, 55-75, and 84-104; these read LMLT…IAFW, FFLV…LLPL, and LNTM…SLAY.

Belongs to the complex I subunit 3 family. As to quaternary structure, core subunit of respiratory chain NADH dehydrogenase (Complex I) which is composed of 45 different subunits. Interacts with TMEM186. Interacts with TMEM242.

It is found in the mitochondrion inner membrane. It carries out the reaction a ubiquinone + NADH + 5 H(+)(in) = a ubiquinol + NAD(+) + 4 H(+)(out). Its function is as follows. Core subunit of the mitochondrial membrane respiratory chain NADH dehydrogenase (Complex I) which catalyzes electron transfer from NADH through the respiratory chain, using ubiquinone as an electron acceptor. Essential for the catalytic activity of complex I. In Equus asinus (Donkey), this protein is NADH-ubiquinone oxidoreductase chain 3.